The chain runs to 264 residues: Thiazole synthase (264 aa).

Lys100 serves as the catalytic Schiff-base intermediate with DXP. 1-deoxy-D-xylulose 5-phosphate is bound by residues Gly161, 187 to 188, and 209 to 210; these read AG and NT.

This sequence belongs to the ThiG family. In terms of assembly, homotetramer. Forms heterodimers with either ThiH or ThiS.

It is found in the cytoplasm. It catalyses the reaction [ThiS sulfur-carrier protein]-C-terminal-Gly-aminoethanethioate + 2-iminoacetate + 1-deoxy-D-xylulose 5-phosphate = [ThiS sulfur-carrier protein]-C-terminal Gly-Gly + 2-[(2R,5Z)-2-carboxy-4-methylthiazol-5(2H)-ylidene]ethyl phosphate + 2 H2O + H(+). The protein operates within cofactor biosynthesis; thiamine diphosphate biosynthesis. Its function is as follows. Catalyzes the rearrangement of 1-deoxy-D-xylulose 5-phosphate (DXP) to produce the thiazole phosphate moiety of thiamine. Sulfur is provided by the thiocarboxylate moiety of the carrier protein ThiS. In vitro, sulfur can be provided by H(2)S. This Nitrosospira multiformis (strain ATCC 25196 / NCIMB 11849 / C 71) protein is Thiazole synthase.